Consider the following 313-residue polypeptide: NNQLALKLAATGGSTNSLPALALQNLLNTWEDTSCCSQTSPGQQSWPRDGAQDGLYTLSTADGEIYQTFCDMSTHGGGWTLVASVHENNAHGKCTVGDRWSSQQGNSPLYPEGDGNWANNNIFGSAMGSTSDDYKNPGYYDLQAGDLSVWHVPDRAPLRKEMIESSVLLFYRTGFLSSEGGNLLRLYEKYPVKYGAGSCKVDNGPAVPIVYDFGSAEKTAAYYSPSGRGEFTAGFVQFRVFNNEKAPMALCSGLKVTGCNTEHHCIGGGGFFPEGNPRQCGDFPAFDWDGYGTHQSWSTSREMIESSVLLFYR.

The region spanning 33-251 (TSCCSQTSPG…NNEKAPMALC (219 aa)) is the Fibrinogen C-terminal domain. H86, E87, N89, G92, G97, D98, and D133 together coordinate Ca(2+). Disulfide bonds link C94–C280, C199–C259, and C251–C265. Residues N260, E262, E274, and D282 each contribute to the Ca(2+) site. Residues 262–263 (EH) and E274 contribute to the a carbohydrate site.

As to quaternary structure, monomer, homodimer, homotrimer and homotetramer. Mostly monomeric or dimeric.

It is found in the secreted. In terms of biological role, binds mannan, mannose and, to a lesser degree, D-lactose, N-acetylgalactosamine, N-acetylglucosamine and beta-D-glucose. This chain is Intelectin-like protein, found in Alligator mississippiensis (American alligator).